We begin with the raw amino-acid sequence, 436 residues long: MAETVVNVVGAGLAGSEAAYQLAQRGIKVNLIEMRPVRQTPAHHTDKFAELVCSNSLRGNSLTNAVGVLKEEMRRLDSLIIKAADAARVPAGGALAVDRHDFAGYITDTLKSHPNVNVINEEIESIPEGYTIIATGPLTTEGLAKEIVEITGEDQLYFYDAAAPIIEKESIDMDKVYLKSRYDKGEAAYLNCPMTEEEFDRFYDAVLEAEAAPVNEFEKEKYFEGCMPFEVMAERGRKTLLFGPMKPVGLEDPKTGKRPFAVVQLRQDDAAGTLYNIVGFQTHLKWGAQKEVIRLIPGLENVDIVRYGVMHRNTFINSPDVLSETYQLKGNDHLYFAGQMTGVEGYVESAASGLVAGINVAHKLQDKAEVVFPRETMIGSMAYYISHANNNKNFQPMNANFGLVPSLEKRIKDKKERYEQQANRALTYLENFKQTL.

An FAD-binding site is contributed by 10-15 (GAGLAG).

This sequence belongs to the MnmG family. TrmFO subfamily. FAD is required as a cofactor.

The protein localises to the cytoplasm. It carries out the reaction uridine(54) in tRNA + (6R)-5,10-methylene-5,6,7,8-tetrahydrofolate + NADH + H(+) = 5-methyluridine(54) in tRNA + (6S)-5,6,7,8-tetrahydrofolate + NAD(+). The enzyme catalyses uridine(54) in tRNA + (6R)-5,10-methylene-5,6,7,8-tetrahydrofolate + NADPH + H(+) = 5-methyluridine(54) in tRNA + (6S)-5,6,7,8-tetrahydrofolate + NADP(+). In terms of biological role, catalyzes the folate-dependent formation of 5-methyl-uridine at position 54 (M-5-U54) in all tRNAs. This is Methylenetetrahydrofolate--tRNA-(uracil-5-)-methyltransferase TrmFO from Staphylococcus carnosus (strain TM300).